Here is a 97-residue protein sequence, read N- to C-terminus: Putative septation protein SpoVG (97 aa).

The protein belongs to the SpoVG family.

In terms of biological role, could be involved in septation. This Anaeromyxobacter sp. (strain Fw109-5) protein is Putative septation protein SpoVG.